The following is a 403-amino-acid chain: Methylthioribose-1-phosphate isomerase (403 aa).

D277 acts as the Proton donor in catalysis.

Belongs to the eIF-2B alpha/beta/delta subunits family. MtnA subfamily.

It localises to the cytoplasm. The protein resides in the nucleus. The catalysed reaction is 5-(methylsulfanyl)-alpha-D-ribose 1-phosphate = 5-(methylsulfanyl)-D-ribulose 1-phosphate. It participates in amino-acid biosynthesis; L-methionine biosynthesis via salvage pathway; L-methionine from S-methyl-5-thio-alpha-D-ribose 1-phosphate: step 1/6. In terms of biological role, catalyzes the interconversion of methylthioribose-1-phosphate (MTR-1-P) into methylthioribulose-1-phosphate (MTRu-1-P). This chain is Methylthioribose-1-phosphate isomerase, found in Lodderomyces elongisporus (strain ATCC 11503 / CBS 2605 / JCM 1781 / NBRC 1676 / NRRL YB-4239) (Yeast).